Here is a 258-residue protein sequence, read N- to C-terminus: Gamma carbonic anhydrase 3, mitochondrial (258 aa).

Residues 1–43 constitute a mitochondrion transit peptide; that stretch reads MGTMGKAFYSVGFWIRETGQALDRLGCRLQGKNHFREQLSRHR. Substrate-binding positions include 86–88 and 101–102; these read RGD and QD. H107, H130, and H135 together coordinate Zn(2+). A substrate-binding site is contributed by N209.

The protein belongs to the gamma-class carbonic anhydrase family. Homotrimer. Component of the oxidoreductase respiratory chain complex I; element of the extra matrix-exposed domain, which is attached to the membrane arm of this complex. Zn(2+) serves as cofactor.

The protein localises to the mitochondrion membrane. Functionally, enzyme involved in the catabolism of H(2)CO(3) but that does not mediates the reversible hydration of carbon dioxide. Mediates complex I assembly in mitochondria and respiration. In Arabidopsis thaliana (Mouse-ear cress), this protein is Gamma carbonic anhydrase 3, mitochondrial (GAMMACA3).